The primary structure comprises 409 residues: Tryptophan synthase beta chain (409 aa).

K104 is subject to N6-(pyridoxal phosphate)lysine.

It belongs to the TrpB family. As to quaternary structure, tetramer of two alpha and two beta chains. Pyridoxal 5'-phosphate serves as cofactor.

The catalysed reaction is (1S,2R)-1-C-(indol-3-yl)glycerol 3-phosphate + L-serine = D-glyceraldehyde 3-phosphate + L-tryptophan + H2O. It participates in amino-acid biosynthesis; L-tryptophan biosynthesis; L-tryptophan from chorismate: step 5/5. The beta subunit is responsible for the synthesis of L-tryptophan from indole and L-serine. This Trichodesmium erythraeum (strain IMS101) protein is Tryptophan synthase beta chain.